We begin with the raw amino-acid sequence, 336 residues long: Gastrula zinc finger protein XlCGF57.1 (336 aa).

11 C2H2-type zinc fingers span residues 6-28 (YTCT…MKIH), 34-56 (FICT…MKTH), 62-84 (FTCT…LTIH), 90-112 (FSCT…MKTH), 118-140 (FTCT…MKTH), 146-168 (FTCT…LKIH), 174-196 (FTCT…LKIH), 202-224 (FTCT…MKIH), 230-252 (FSCT…LTMH), 258-280 (FTCT…TKIH), and 286-308 (FSCT…LKIH).

The protein belongs to the krueppel C2H2-type zinc-finger protein family.

The protein localises to the nucleus. Its function is as follows. May be involved in transcriptional regulation. This is Gastrula zinc finger protein XlCGF57.1 from Xenopus laevis (African clawed frog).